The following is an 86-amino-acid chain: Small ribosomal subunit protein uS15 (86 aa).

The segment covering 1–10 (MSIDTQSIIE) has biased composition (polar residues). A disordered region spans residues 1–21 (MSIDTQSIIENNKRSAHDTGS).

It belongs to the universal ribosomal protein uS15 family. As to quaternary structure, part of the 30S ribosomal subunit. Forms a bridge to the 50S subunit in the 70S ribosome, contacting the 23S rRNA.

Functionally, one of the primary rRNA binding proteins, it binds directly to 16S rRNA where it helps nucleate assembly of the platform of the 30S subunit by binding and bridging several RNA helices of the 16S rRNA. In terms of biological role, forms an intersubunit bridge (bridge B4) with the 23S rRNA of the 50S subunit in the ribosome. This chain is Small ribosomal subunit protein uS15, found in Xylella fastidiosa (strain M23).